The following is a 312-amino-acid chain: Zinc finger CCCH domain-containing protein 25 (312 aa).

An RRM domain is found at 36–114 (AYVFVGGIPY…RIVRVDHVSK (79 aa)). A C3H1-type zinc finger spans residues 130–157 (REARGVCYAFQKGECNRGASCRYSHDEQ). The interval 153-312 (SHDEQRNANT…DSERYRKSRR (160 aa)) is disordered. Composition is skewed to basic and acidic residues over residues 166–184 (SKEE…EPPM), 197–210 (RFPD…KSTG), and 219–312 (EAYK…KSRR).

The sequence is that of Zinc finger CCCH domain-containing protein 25 from Oryza sativa subsp. japonica (Rice).